The chain runs to 185 residues: Probable gluconokinase (185 aa).

Residue 11 to 18 (GVSGSGKS) participates in ATP binding.

The protein belongs to the gluconokinase GntK/GntV family.

The catalysed reaction is D-gluconate + ATP = 6-phospho-D-gluconate + ADP + H(+). It functions in the pathway carbohydrate acid metabolism; D-gluconate degradation. The protein is Probable gluconokinase (Idnk) of Rattus norvegicus (Rat).